The following is a 115-amino-acid chain: uncharacterized protein (115 aa).

This is an uncharacterized protein from Acidianus sp. F28 (AFV-2).